A 249-amino-acid polypeptide reads, in one-letter code: Small ribosomal subunit protein uS2 (249 aa).

It belongs to the universal ribosomal protein uS2 family.

The protein is Small ribosomal subunit protein uS2 of Bordetella parapertussis (strain 12822 / ATCC BAA-587 / NCTC 13253).